Here is a 667-residue protein sequence, read N- to C-terminus: Threonine--tRNA ligase (667 aa).

The TGS domain maps to M1–R64. Residues D245–P553 form a catalytic region. Residues C347, H398, and H530 each coordinate Zn(2+).

Belongs to the class-II aminoacyl-tRNA synthetase family. Homodimer. Zn(2+) is required as a cofactor.

Its subcellular location is the cytoplasm. It catalyses the reaction tRNA(Thr) + L-threonine + ATP = L-threonyl-tRNA(Thr) + AMP + diphosphate + H(+). In terms of biological role, catalyzes the attachment of threonine to tRNA(Thr) in a two-step reaction: L-threonine is first activated by ATP to form Thr-AMP and then transferred to the acceptor end of tRNA(Thr). Also edits incorrectly charged L-seryl-tRNA(Thr). This Agrobacterium fabrum (strain C58 / ATCC 33970) (Agrobacterium tumefaciens (strain C58)) protein is Threonine--tRNA ligase.